We begin with the raw amino-acid sequence, 440 residues long: Thymidine phosphorylase (440 aa).

This sequence belongs to the thymidine/pyrimidine-nucleoside phosphorylase family. In terms of assembly, homodimer.

It carries out the reaction thymidine + phosphate = 2-deoxy-alpha-D-ribose 1-phosphate + thymine. The protein operates within pyrimidine metabolism; dTMP biosynthesis via salvage pathway; dTMP from thymine: step 1/2. The enzymes which catalyze the reversible phosphorolysis of pyrimidine nucleosides are involved in the degradation of these compounds and in their utilization as carbon and energy sources, or in the rescue of pyrimidine bases for nucleotide synthesis. The chain is Thymidine phosphorylase from Klebsiella pneumoniae subsp. pneumoniae (strain ATCC 700721 / MGH 78578).